Here is a 274-residue protein sequence, read N- to C-terminus: Protein STAY-GREEN, chloroplastic (274 aa).

Residues 1 to 48 (MAAATSTMSLLPPITQQQRWHAADSLVVLASRCHNSRRRRRCRYVVPR) constitute a chloroplast transit peptide.

The protein belongs to the staygreen family. As to quaternary structure, interacts with LHCII complex. Expressed in leaves, roots and developing seeds.

The protein resides in the plastid. It localises to the chloroplast membrane. Its subcellular location is the chloroplast stroma. Functionally, involved in the disassembling mechanism of the intact light-harvesting complex of photosystem II (LHCII) in the thylakoid membranes. Required to trigger chlorophyll degradation during natural and dark-induced leaf senescence. This Oryza sativa subsp. japonica (Rice) protein is Protein STAY-GREEN, chloroplastic (SGR).